The primary structure comprises 377 residues: Geranylgeranyl transferase type-1 subunit beta (377 aa).

PFTB repeat units lie at residues 144–186 (KEAC…YMLN), 193–234 (MKKA…CLMG), 245–284 (LNRI…KLLK), and 291–333 (FEKN…SLME). Residues 219–221 (HGG) and 263–266 (RPNK) contribute to the geranylgeranyl diphosphate site. Zn(2+) is bound by residues Asp-269 and Cys-271. Position 272-275 (272-275 (YSFW)) interacts with geranylgeranyl diphosphate. His-321 is a binding site for Zn(2+).

Belongs to the protein prenyltransferase subunit beta family. In terms of assembly, heterodimer of FNTA and PGGT1B. PGGT1B mediates interaction with substrate peptides. Requires Zn(2+) as cofactor. It depends on Mg(2+) as a cofactor.

The enzyme catalyses geranylgeranyl diphosphate + L-cysteinyl-[protein] = S-geranylgeranyl-L-cysteinyl-[protein] + diphosphate. Catalyzes the transfer of a geranyl-geranyl moiety from geranyl-geranyl pyrophosphate to a cysteine at the fourth position from the C-terminus of proteins having the C-terminal sequence Cys-aliphatic-aliphatic-X. Known substrates include RAC1, RAC2, RAP1A and RAP1B. The protein is Geranylgeranyl transferase type-1 subunit beta (PGGT1B) of Bos taurus (Bovine).